Here is a 398-residue protein sequence, read N- to C-terminus: Steroid C26-monooxygenase (398 aa).

Cys340 provides a ligand contact to heme.

The protein belongs to the cytochrome P450 family. Heme is required as a cofactor.

It carries out the reaction cholest-4-en-3-one + 6 reduced [2Fe-2S]-[ferredoxin] + 3 O2 + 5 H(+) = (25R)-3-oxocholest-4-en-26-oate + 6 oxidized [2Fe-2S]-[ferredoxin] + 4 H2O. It catalyses the reaction cholest-4-en-3-one + 2 reduced [2Fe-2S]-[ferredoxin] + O2 + 2 H(+) = (25R)-3-oxocholest-4-en-26-ol + 2 oxidized [2Fe-2S]-[ferredoxin] + H2O. The catalysed reaction is (25R)-3-oxocholest-4-en-26-ol + 2 reduced [2Fe-2S]-[ferredoxin] + O2 + 2 H(+) = (25R)-3-oxocholest-4-en-26-al + 2 oxidized [2Fe-2S]-[ferredoxin] + 2 H2O. The enzyme catalyses (25R)-3-oxocholest-4-en-26-al + 2 reduced [2Fe-2S]-[ferredoxin] + O2 + H(+) = (25R)-3-oxocholest-4-en-26-oate + 2 oxidized [2Fe-2S]-[ferredoxin] + H2O. It carries out the reaction cholesterol + NADPH + O2 + H(+) = 26-hydroxycholesterol + NADP(+) + H2O. It catalyses the reaction 26-hydroxycholesterol + 2 reduced [2Fe-2S]-[ferredoxin] + O2 + 2 H(+) = (3beta)-hydroxy-cholest-5-en-26-al + 2 oxidized [2Fe-2S]-[ferredoxin] + 2 H2O. The catalysed reaction is (3beta)-hydroxy-cholest-5-en-26-al + NADPH + O2 = (3beta)-hydroxy-cholest-5-en-26-oate + NADP(+) + H2O. The enzyme catalyses (25S)-3-oxocholest-4-en-26-ol + 2 reduced [2Fe-2S]-[ferredoxin] + O2 + 2 H(+) = (25S)-3-oxocholest-4-en-26-al + 2 oxidized [2Fe-2S]-[ferredoxin] + 2 H2O. It carries out the reaction (25S)-3-oxocholest-4-en-26-al + 2 reduced [2Fe-2S]-[ferredoxin] + O2 + H(+) = (25S)-3-oxocholest-4-en-26-oate + 2 oxidized [2Fe-2S]-[ferredoxin] + H2O. The protein operates within steroid metabolism; cholesterol degradation. Inhibited by econazole, clotrimazole and miconazole. Its function is as follows. Involved in the utilization of cholesterol as the sole carbon and energy source by degrading the side chain during infection. Primarily catalyzes the sequential oxidation of the terminal methyl of cholest-4-en-3-one into (25R)-26-hydroxycholest-4-en-3-one (alcohol), (25R)-26-oxocholest-4-en-3-one (aldehyde), to finally yield the carboxylic acid (25R)-3-oxocholest-4-en-26-oate. In vitro, Cyp142 catalyzes with equal preference the oxidation of both (25R)- and (25S)-26-hydroxycholest-4-en-3-one diastereomers to the corresponding carboxylic acid which is a prerequisite for entry into the beta-oxidation pathway. Also able to sequentially oxidize cholesterol itself, not only cholest-4-en-3-one. This Mycobacterium tuberculosis (strain ATCC 25618 / H37Rv) protein is Steroid C26-monooxygenase (cyp142).